A 403-amino-acid chain; its full sequence is Vitamin D(3) 25-hydroxylase (403 aa).

Heme is bound at residue C347.

It belongs to the cytochrome P450 family. Heme serves as cofactor.

It localises to the cytoplasm. It carries out the reaction 5beta-cholestane-3alpha,7alpha,12alpha-triol + 6 reduced [adrenodoxin] + 3 O2 + 5 H(+) = (25R)-3alpha,7alpha,12alpha-trihydroxy-5beta-cholestan-26-oate + 6 oxidized [adrenodoxin] + 4 H2O. Its activity is regulated as follows. Activated by partially methylated beta-cyclodextrin. Hydroxylates vitamin D(3) into 25-hydroxyvitamin D(3) and 1-alpha,25-dihydroxyvitamin D(3), its physiologically active forms. It first hydroxylates the C-25 position of vitamin D(3) to form 25-hydroxyvitamin D(3), then subsequently hydroxylates the C-1-alpha position to form 1-alpha,25-dihydroxyvitamin D(3). Also displays 25-hydroxylase activity on vitamin D(2) and 7-dehydrocholesterol. May play a role in the biosynthesis of steroid metabolic intermediates. This chain is Vitamin D(3) 25-hydroxylase, found in Pseudonocardia autotrophica (Amycolata autotrophica).